Reading from the N-terminus, the 66-residue chain is Large ribosomal subunit protein bL32 (66 aa).

It belongs to the bacterial ribosomal protein bL32 family.

This is Large ribosomal subunit protein bL32 from Leptospira interrogans serogroup Icterohaemorrhagiae serovar copenhageni (strain Fiocruz L1-130).